Here is a 176-residue protein sequence, read N- to C-terminus: ATP-dependent protease subunit HslV (176 aa).

T5 is a catalytic residue. Na(+) is bound by residues G161, C164, and T167.

The protein belongs to the peptidase T1B family. HslV subfamily. As to quaternary structure, a double ring-shaped homohexamer of HslV is capped on each side by a ring-shaped HslU homohexamer. The assembly of the HslU/HslV complex is dependent on binding of ATP.

It is found in the cytoplasm. It catalyses the reaction ATP-dependent cleavage of peptide bonds with broad specificity.. With respect to regulation, allosterically activated by HslU binding. Functionally, protease subunit of a proteasome-like degradation complex believed to be a general protein degrading machinery. The polypeptide is ATP-dependent protease subunit HslV (Sulfurovum sp. (strain NBC37-1)).